We begin with the raw amino-acid sequence, 783 residues long: MATLTEIATLEEKYIELCKMHGILPNTAILSAFFEAEVKKSRNQRCIMNLYVDRVKYDDYLPLLELCNEINTSEVQGIDLFVRSACSLEDHYALPLIRSVNQKLRVVHLHDSFGKNFWQDVFFQGLSCKVLNVRSMHIHKLNIVGEFTQLHTLILDKNRIVGFGEDCFSCMPKLTYLSMCDTLVSDLWTSAAALLKLPSLKELRFQIWISCSDSSPLNSESSPSSSTKDDINTFIESDPPVEADMWDVAEQMDPSLPVEETLHSMDFSYKIPEQDDLDSHVSVSAGLNGEVLMREKVRRGKMPYQPKDVSPVDTFTRQFGNVGLKYISSKASPICSEKHYRMYMINSLPKLQVLDNLAIRKSDRDKAIETYSANFEDLPYKRKKESVVRVLENREKRSSKGKSQNSYKRSLCAAKMGSPASPLLHSLPFLSSRIQQEDDNSRLCPRQFEYHPLDPSLMVFGTLDGEVVVLNHESGKIFRYIPSNGSQSTILGLCWLKIYPSMVIAGSANGSLKLYDIQKASSTVTTSSHSTSGSVTFDEFDQLTSVHANSTDQLFLASGYSKDVALYDIGRGTRLQVFANMHQEHINVVKFSNHSPFLFATSSFDKDVKLWDLRQEPSRPCYTASSTKGNVMVCFSPDDRYLLASAVDNEVRQLLTVDGRLHLNFEIVPRVSSMNYTRSYYMNGNDYIISGSCDENVIRVCCAQTGRRLRDVTLEGNGSDFSMMYVQSLRGDPFRDFNMSVLAAYARSSSLSEIVKVNLLASRDSTAEESHGLRSYPSSSMGG.

WD repeat units lie at residues Gly-145–Pro-198 and Ser-212–Leu-256. The Nuclear localization signal signature appears at Arg-382–Arg-389. WD repeat units follow at residues Asp-439–Tyr-480, Gly-485–Thr-525, Asp-538–Val-577, Met-581–Cys-621, Ser-625–Asn-664, and Glu-666–Arg-710.

Interacts directly with DDB1A. Binds to COP1 and RUP1.

The protein localises to the nucleus. May act as a substrate receptor of a CUL4-RING E3 ubiquitin-protein ligase (CRL4) complex involved in the negative regulation of cellular responses to ultraviolet-B (UV-B) illumination, likely in coordination with RUP1. Interacts with COP1 and probably prevents the formation of active UVR8-COP1 complex, thus avoiding UVR8-COP1-mediated positive regulation of UV-B responses. This chain is Protein DWD HYPERSENSITIVE TO UV-B 1, found in Arabidopsis thaliana (Mouse-ear cress).